The sequence spans 356 residues: Protein RecA (356 aa).

Residue 68-75 participates in ATP binding; sequence GQESSGKT.

The protein belongs to the RecA family.

The protein resides in the cytoplasm. Its function is as follows. Can catalyze the hydrolysis of ATP in the presence of single-stranded DNA, the ATP-dependent uptake of single-stranded DNA by duplex DNA, and the ATP-dependent hybridization of homologous single-stranded DNAs. It interacts with LexA causing its activation and leading to its autocatalytic cleavage. In Thermotoga maritima (strain ATCC 43589 / DSM 3109 / JCM 10099 / NBRC 100826 / MSB8), this protein is Protein RecA.